We begin with the raw amino-acid sequence, 201 residues long: Peptidyl-tRNA hydrolase (201 aa).

TRNA is bound at residue Y15. The active-site Proton acceptor is H20. 3 residues coordinate tRNA: Y66, N68, and N114.

This sequence belongs to the PTH family. In terms of assembly, monomer.

It localises to the cytoplasm. The enzyme catalyses an N-acyl-L-alpha-aminoacyl-tRNA + H2O = an N-acyl-L-amino acid + a tRNA + H(+). In terms of biological role, hydrolyzes ribosome-free peptidyl-tRNAs (with 1 or more amino acids incorporated), which drop off the ribosome during protein synthesis, or as a result of ribosome stalling. Functionally, catalyzes the release of premature peptidyl moieties from peptidyl-tRNA molecules trapped in stalled 50S ribosomal subunits, and thus maintains levels of free tRNAs and 50S ribosomes. This Burkholderia mallei (strain ATCC 23344) protein is Peptidyl-tRNA hydrolase.